Reading from the N-terminus, the 298-residue chain is Peroxisomal 2,4-dienoyl-CoA reductase [(3E)-enoyl-CoA-producing] (298 aa).

19–24 provides a ligand contact to NADP(+); it reads GGGSGI. Arg-44 lines the substrate pocket. Asp-69 contacts NADP(+). Substrate is bound by residues Arg-71, Phe-101, and 109–111; that span reads SPN. NADP(+) contacts are provided by residues Lys-173 and 200-206; that span reads PGPIGGT. A disordered region spans residues 279-298; that stretch reads SRAVEKRSRAKPVGLPTSKL. The Microbody targeting signal motif lies at 296–298; sequence SKL.

The protein belongs to the short-chain dehydrogenases/reductases (SDR) family. 2,4-dienoyl-CoA reductase subfamily.

It localises to the peroxisome. The catalysed reaction is a (2E,4Z)-dienoyl-CoA + NADPH + H(+) = a 4,5-saturated-(3E)-enoyl-CoA + NADP(+). The enzyme catalyses a (2E,4E)-dienoyl-CoA + NADPH + H(+) = a 4,5-saturated-(3E)-enoyl-CoA + NADP(+). Functionally, auxiliary enzyme of beta-oxidation. Participates in the degradation of unsaturated fatty enoyl-CoA esters having double bonds in both even- and odd-numbered positions in peroxisome. Catalyzes the NADP-dependent reduction of 2,4-dienoyl-CoA to yield trans-3-enoyl-CoA. This Arabidopsis thaliana (Mouse-ear cress) protein is Peroxisomal 2,4-dienoyl-CoA reductase [(3E)-enoyl-CoA-producing].